We begin with the raw amino-acid sequence, 77 residues long: U8-lycotoxin-Ls1j (77 aa).

Residues 1–20 (MKLIIFTGLILFAIVSLIEA) form the signal peptide. Positions 21-26 (QANNEK) are excised as a propeptide.

It belongs to the neurotoxin 19 (CSTX) family. 08 (U8-Lctx) subfamily. In terms of processing, contains 4 disulfide bonds. Expressed by the venom gland.

The protein localises to the secreted. This Lycosa singoriensis (Wolf spider) protein is U8-lycotoxin-Ls1j.